The following is a 29-amino-acid chain: Cyclotide psyleio B (29 aa).

Residues 1–29 (GDLPICGETCFGGTCNTPGCVCAWPVCNR) constitute a cross-link (cyclopeptide (Gly-Arg)). Cystine bridges form between Cys-6/Cys-20, Cys-10/Cys-22, and Cys-15/Cys-27.

This is a cyclic peptide.

In terms of biological role, probably participates in a plant defense mechanism. This is Cyclotide psyleio B from Psychotria brachyceras.